A 154-amino-acid chain; its full sequence is Stigma-specific STIG1-like protein 3 (154 aa).

A signal peptide spans 1–23 (MGHRNTVLTILLTISIAIMVLIA).

This sequence belongs to the STIG1 family.

The chain is Stigma-specific STIG1-like protein 3 from Arabidopsis thaliana (Mouse-ear cress).